The primary structure comprises 585 residues: Membrane protein insertase YidC (585 aa).

6 consecutive transmembrane segments (helical) span residues 5–25 (SVTG…FMSP), 338–358 (FGWD…AFTW), 362–382 (FVSN…LVTY), 432–452 (LGGC…FYVF), 482–502 (IPMY…TVFL), and 518–538 (IMLY…PSGL).

This sequence belongs to the OXA1/ALB3/YidC family. Type 1 subfamily. In terms of assembly, interacts with the Sec translocase complex via SecD. Specifically interacts with transmembrane segments of nascent integral membrane proteins during membrane integration.

The protein resides in the cell inner membrane. Required for the insertion and/or proper folding and/or complex formation of integral membrane proteins into the membrane. Involved in integration of membrane proteins that insert both dependently and independently of the Sec translocase complex, as well as at least some lipoproteins. Aids folding of multispanning membrane proteins. The polypeptide is Membrane protein insertase YidC (Chlorobium luteolum (strain DSM 273 / BCRC 81028 / 2530) (Pelodictyon luteolum)).